We begin with the raw amino-acid sequence, 630 residues long: MTGLLASRLRAEGARSPTKGTDIPMRQPSAEDLDAAHQLVSSARGGRDNVMNFRSDRQEMTGKALDNTQGDGSRNMDSQLQNGHKAPVEQRAGESPPESGANPIDHPTSSKKSPKAQSKEQAFTGHSCSNCGTKRTPLWRRSPTGATICNACGLYLKARNTDRPTHRSRSLLTPYGSSSAQTLDKSRSSTSPTNDGNDPRLTDTWSNYAVKECTPSGSCPGGGSCNGTGGAEGCDGCPAYNNRVYKSAARNAMALHTPRTSPQVSTQGGPGSTEGDAGSSNPETMTLHIACQNCQTTVTPLWRRDENGHPICNACGLYHKLHGAYRPPTMKKSIIKRRKRVVPAMREQSPPSATQSSNGSVSPEASPAALAHNHDSHRQYQNVEHGNGHPPPHTRPLYSHAYHAPPPADFTGYTSNVISLPHHPPSTSQQLRPYDNNHNNGETTNTHRAPMPALHNPKKRTISESSIEDSQRPQASQILTHIPQINPPTPPSSSSASFPNNNPGRFNSISSLLNHPGEAATVTAHDRDDSRVDPALSSAVAPRTQQPQQEHQHASAGSHSPPRFSPSLSPAPPSTTAVPVGGGSGSGAAAVAGVVDHRDAKAERRARLQREAQDMREALKAKERELALLE.

2 disordered regions span residues 1 to 139 (MTGL…TPLW) and 162 to 203 (DRPT…RLTD). Composition is skewed to polar residues over residues 66 to 82 (DNTQ…QLQN), 115 to 133 (KAQS…NCGT), and 175 to 196 (YGSS…TNDG). The segment at 128-152 (CSNCGTKRTPLWRRSPTGATICNAC) adopts a GATA-type 1 zinc-finger fold. Residues 219-237 (CPGGGSCNGTGGAEGCDGC) form a cystein-rich region (CRR) region. Positions 256–283 (HTPRTSPQVSTQGGPGSTEGDAGSSNPE) are disordered. Polar residues predominate over residues 258-267 (PRTSPQVSTQ). The segment at 291–315 (CQNCQTTVTPLWRRDENGHPICNAC) adopts a GATA-type 2 zinc-finger fold. Residues 339–609 (KRVVPAMREQ…AKAERRARLQ (271 aa)) form a disordered region. Residues 349 to 363 (SPPSATQSSNGSVSP) show a composition bias toward polar residues. Composition is skewed to low complexity over residues 436-447 (NNHNNGETTNTH) and 492-503 (SSSSASFPNNNP). Over residues 504–513 (GRFNSISSLL) the composition is skewed to polar residues. Over residues 558 to 568 (SHSPPRFSPSL) the composition is skewed to low complexity. The span at 595–609 (VDHRDAKAERRARLQ) shows a compositional bias: basic and acidic residues. A coiled-coil region spans residues 595-630 (VDHRDAKAERRARLQREAQDMREALKAKERELALLE).

It localises to the nucleus. Functionally, GATA-type transcription repressor that regulates iron- acquisition genes through specific binding the GATA sequence element 5'-(G/A)ATC(T/A)GATAA-3' of target promoters in an iron- and zinc-dependent manner. Regulation occurs via direct binding of iron ions. Iron acquisition regulation is critical for survival under both iron-limiting conditions (to acquire essential iron) and iron-replete conditions (to limit iron toxicity). SRE1 targets include genes encoding a number of key iron-regulated factors such as those involved in siderophore biosynthesis, presumed ferric reductase activity, iron-responsive transcriptional regulation, oxidative stress response, as well as genes encoding a number of putative oxidoreductases, metabolic and mitochondrial enzymes, superoxide dismutase, and genes previously identified as induced during nitrosative stress. The protein is GATA-type transcription factor SRE1 of Ajellomyces capsulatus (Darling's disease fungus).